Reading from the N-terminus, the 180-residue chain is MAAAAGFNWDDADVKKRWDAFTKFGAATATEMTGKNFDKWLKDAGVLDNKAITGTMTGIAFSKVTGPKKKATFDETKKVLAFVAEDRARQSKKPIQDELDAITEKLAKLEAPSVGGAAKANAAGVYSRLTDHTKYTGAHKERFDAEGKGKGKSGRADTTENTGYVGAYKNKDSYDKTHGK.

Basic and acidic residues-rich tracts occupy residues 136–158 and 169–180; these read TGAH…RADT and KNKDSYDKTHGK. The segment at 136-180 is disordered; it reads TGAHKERFDAEGKGKGKSGRADTTENTGYVGAYKNKDSYDKTHGK.

It belongs to the TPPP family.

In terms of biological role, regulator of microtubule dynamics. This chain is Tubulin polymerization-promoting protein homolog, found in Caenorhabditis elegans.